Reading from the N-terminus, the 141-residue chain is Hemoglobin subunit alpha (141 aa).

One can recognise a Globin domain in the interval 1 to 141 (VLSSKDKANI…VSTVLTSKYR (141 aa)). Ser3 bears the Phosphoserine mark. N6-succinyllysine occurs at positions 7 and 11. Lys16 carries the post-translational modification N6-acetyllysine; alternate. An N6-succinyllysine; alternate modification is found at Lys16. Tyr24 is subject to Phosphotyrosine. Lys40 carries the N6-succinyllysine modification. Ser49 bears the Phosphoserine mark. Position 58 (His58) interacts with O2. His87 provides a ligand contact to heme b. Ser102 carries the post-translational modification Phosphoserine. Thr108 is modified (phosphothreonine). At Ser124 the chain carries Phosphoserine. Phosphothreonine is present on residues Thr134 and Thr137. Ser138 is modified (phosphoserine).

It belongs to the globin family. As to quaternary structure, heterotetramer of two alpha chains and two beta chains. Red blood cells.

Functionally, involved in oxygen transport from the lung to the various peripheral tissues. Hemopressin acts as an antagonist peptide of the cannabinoid receptor CNR1. Hemopressin-binding efficiently blocks cannabinoid receptor CNR1 and subsequent signaling. This is Hemoglobin subunit alpha (HBA) from Vicugna pacos (Alpaca).